The following is a 382-amino-acid chain: MRQIRSPRALRVIPLTALMLISGCGEKEQVSSATPPPDVGVYTVRAQALTLTTDLPGRTSAFRVAEVRPQVSGILQKRSFVEGAEVKLGQQLYQIDPRTYEAQLRRAEANRTSAQNLARRYETLLKTKAVSKQQYDDALAAWKQAEADYQVARIDVQYTRVLSPISGRIGRSTVTEGALVTNGQAQSLATVTQLDPIYVDVTQPITKLLGLQKALESGRLQKTGENQAEVSLTLDDGSAYPLPGTLKFSEVSVDPTTGSVTLRAEFPNPNRKLLPGMFVHALLKEGVQNAAILVPQQAISRDTRGVPSVWVVKADNTVESREIQTLRTVGNAWLISNGVTEGERIITEGVQRVRSGIAVNAVEAKNVNLVDGFAATTEASAN.

The signal sequence occupies residues 1–23 (MRQIRSPRALRVIPLTALMLISG). C24 is lipidated: N-palmitoyl cysteine. Residue C24 is the site of S-diacylglycerol cysteine attachment. Positions 98 to 127 (RTYEAQLRRAEANRTSAQNLARRYETLLKT) form a coiled coil.

The protein belongs to the membrane fusion protein (MFP) (TC 8.A.1) family.

The protein resides in the cell inner membrane. The periplasmic linker protein component of an organic solvent efflux pump. Involved in export of a number of low log POW compounds including hexane (log POW 3.5), toluene (log POW 2.5) and dimethylphthalate (log POW 2.3). The solvent resistance phenotype has been postulated to depend on the operon expression level. The chain is Solvent efflux pump periplasmic linker SrpA (srpA) from Pseudomonas putida (Arthrobacter siderocapsulatus).